Consider the following 57-residue polypeptide: Large ribosomal subunit protein bL33 (57 aa).

Belongs to the bacterial ribosomal protein bL33 family.

The chain is Large ribosomal subunit protein bL33 from Shewanella sp. (strain MR-4).